Here is a 578-residue protein sequence, read N- to C-terminus: Proline--tRNA ligase (578 aa).

This sequence belongs to the class-II aminoacyl-tRNA synthetase family. ProS type 1 subfamily. In terms of assembly, homodimer.

The protein localises to the cytoplasm. The catalysed reaction is tRNA(Pro) + L-proline + ATP = L-prolyl-tRNA(Pro) + AMP + diphosphate. Catalyzes the attachment of proline to tRNA(Pro) in a two-step reaction: proline is first activated by ATP to form Pro-AMP and then transferred to the acceptor end of tRNA(Pro). As ProRS can inadvertently accommodate and process non-cognate amino acids such as alanine and cysteine, to avoid such errors it has two additional distinct editing activities against alanine. One activity is designated as 'pretransfer' editing and involves the tRNA(Pro)-independent hydrolysis of activated Ala-AMP. The other activity is designated 'posttransfer' editing and involves deacylation of mischarged Ala-tRNA(Pro). The misacylated Cys-tRNA(Pro) is not edited by ProRS. In Burkholderia cenocepacia (strain HI2424), this protein is Proline--tRNA ligase.